The sequence spans 591 residues: Max-binding protein MNT (591 aa).

Residue serine 2 is modified to N-acetylserine. Disordered regions lie at residues 17–122 (AQQQ…APRQ) and 182–223 (PGVQ…GIGT). The segment covering 22-44 (RAREEQERLRLEREREREQEQKR) has biased composition (basic and acidic residues). Composition is skewed to pro residues over residues 63 to 84 (EAPP…PLAT) and 102 to 120 (SLPP…PLAP). Residues 205 to 216 (PAEEAKSSEQKK) show a composition bias toward basic and acidic residues. Residues 222–273 (GTREVHNKLEKNRRAHLKECFETLKRNIPNVDDKKTSNLSVLRTALRYIQSL) enclose the bHLH domain. The tract at residues 273–301 (LKRKEKEYEHEMERLAREKIATQQRLAEL) is leucine-zipper. The disordered stretch occupies residues 321–426 (TGQPEDDQAS…PPPATPTQTL (106 aa)). Positions 336–346 (EGEDNVDEEME) are enriched in acidic residues. Residues 374 to 383 (STAPAPLPTH) are compositionally biased toward pro residues. Low complexity predominate over residues 390–411 (PVALSPAHLPVQQQQPPQQKTP). The span at 412–421 (LPAPPPPPAT) shows a compositional bias: pro residues.

Efficient DNA binding requires dimerization with another bHLH protein. Binds DNA as a homodimer or a heterodimer with MAX.

It is found in the nucleus. In terms of biological role, binds DNA as a heterodimer with MAX and represses transcription. Binds to the canonical E box sequence 5'-CACGTG-3' and, with higher affinity, to 5'-CACGCG-3'. In Mus musculus (Mouse), this protein is Max-binding protein MNT (Mnt).